The sequence spans 176 residues: Small ribosomal subunit protein uS5 (176 aa).

Residues 11–74 enclose the S5 DRBM domain; it reads LSEVLVDVNR…QAAKKKMMKV (64 aa).

Belongs to the universal ribosomal protein uS5 family. Part of the 30S ribosomal subunit. Contacts proteins S4 and S8.

In terms of biological role, with S4 and S12 plays an important role in translational accuracy. Its function is as follows. Located at the back of the 30S subunit body where it stabilizes the conformation of the head with respect to the body. In Rickettsia bellii (strain RML369-C), this protein is Small ribosomal subunit protein uS5.